Here is a 305-residue protein sequence, read N- to C-terminus: Olfactory receptor 4F4 (305 aa).

Residues 1-18 (MVTEFIFLGLSDSQELQT) are Extracellular-facing. Residues 19 to 42 (FLFMLFFVFYGGIVFGNLLIVITV) form a helical membrane-spanning segment. Over 43–50 (VSDSHLHS) the chain is Cytoplasmic. A helical transmembrane segment spans residues 51–72 (PMYFLLANLSLIDLSLSSVTAP). The Extracellular portion of the chain corresponds to 73-93 (KMITDFFSQRKVISFKGCLVQ). Cysteine 90 and cysteine 182 are joined by a disulfide. The helical transmembrane segment at 94–113 (IFLLHFFGGSEMVILIAMGF) threads the bilayer. Residues 114–132 (DRYIAICKPLHYTTIMCGN) lie on the Cytoplasmic side of the membrane. A helical transmembrane segment spans residues 133 to 151 (ACVGIMAVAWGIGFLHSVS). The Extracellular segment spans residues 152–188 (QLAFAVHLPFCGPNEVDSFYCDLPRVIKLACTDTYRL). Residues 189-212 (DIMVIANSGVLTVCSFVLLIISYT) traverse the membrane as a helical segment. The Cytoplasmic portion of the chain corresponds to 213 to 228 (IILMTIQHCPLDKSSK). The helical transmembrane segment at 229-251 (ALSTLTAHITVVLLFFGPCVFIY) threads the bilayer. Over 252-262 (AWPFPIKSLDK) the chain is Extracellular. Residues 263–282 (FLAVFYSVITPLLNPIIYTL) form a helical membrane-spanning segment. Residues 283–305 (RNKDMKTAIRRLRKWDAHSSVKF) are Cytoplasmic-facing.

It belongs to the G-protein coupled receptor 1 family.

Its subcellular location is the cell membrane. Odorant receptor. This Homo sapiens (Human) protein is Olfactory receptor 4F4 (OR4F4).